Consider the following 127-residue polypeptide: Holo-[acyl-carrier-protein] synthase (127 aa).

2 residues coordinate Mg(2+): aspartate 8 and glutamate 59.

This sequence belongs to the P-Pant transferase superfamily. AcpS family. Requires Mg(2+) as cofactor.

Its subcellular location is the cytoplasm. It carries out the reaction apo-[ACP] + CoA = holo-[ACP] + adenosine 3',5'-bisphosphate + H(+). Transfers the 4'-phosphopantetheine moiety from coenzyme A to a Ser of acyl-carrier-protein. This Rickettsia bellii (strain OSU 85-389) protein is Holo-[acyl-carrier-protein] synthase.